A 132-amino-acid polypeptide reads, in one-letter code: Sec-independent protein translocase protein TatB (132 aa).

Residues 1-21 form a helical membrane-spanning segment; the sequence is MFDIGFWELVLISVVGLVVLG. The segment at 70-132 is disordered; sequence GMEDLSPELK…KVSAADKKAE (63 aa). 2 stretches are compositionally biased toward basic and acidic residues: residues 96–108 and 115–132; these read YADK…ETAK and SAEK…KKAE.

Belongs to the TatB family. The Tat system comprises two distinct complexes: a TatABC complex, containing multiple copies of TatA, TatB and TatC subunits, and a separate TatA complex, containing only TatA subunits. Substrates initially bind to the TatABC complex, which probably triggers association of the separate TatA complex to form the active translocon.

The protein localises to the cell inner membrane. Its function is as follows. Part of the twin-arginine translocation (Tat) system that transports large folded proteins containing a characteristic twin-arginine motif in their signal peptide across membranes. Together with TatC, TatB is part of a receptor directly interacting with Tat signal peptides. TatB may form an oligomeric binding site that transiently accommodates folded Tat precursor proteins before their translocation. This chain is Sec-independent protein translocase protein TatB, found in Vibrio parahaemolyticus serotype O3:K6 (strain RIMD 2210633).